Reading from the N-terminus, the 163-residue chain is Nucleotide-binding protein Cj0374 (163 aa).

It belongs to the YajQ family.

Functionally, nucleotide-binding protein. The chain is Nucleotide-binding protein Cj0374 from Campylobacter jejuni subsp. jejuni serotype O:2 (strain ATCC 700819 / NCTC 11168).